Reading from the N-terminus, the 434-residue chain is Trigger factor (434 aa).

Residues 160 to 245 form the PPIase FKBP-type domain; the sequence is DDKVKMNFIG…LTEVQAANLP (86 aa).

Belongs to the FKBP-type PPIase family. Tig subfamily.

It is found in the cytoplasm. It catalyses the reaction [protein]-peptidylproline (omega=180) = [protein]-peptidylproline (omega=0). Its function is as follows. Involved in protein export. Acts as a chaperone by maintaining the newly synthesized protein in an open conformation. Functions as a peptidyl-prolyl cis-trans isomerase. The chain is Trigger factor from Shewanella frigidimarina (strain NCIMB 400).